Consider the following 1158-residue polypeptide: Adipocyte enhancer-binding protein 1 (1158 aa).

Positions 1-25 are cleaved as a signal peptide; that stretch reads MAAVRGAPLLSCLLALLALCPGGRP. Positions 41-387 are disordered; it reads FLSELEPEPR…TPTEKVKCPP (347 aa). A compositionally biased stretch (acidic residues) spans 45–55; that stretch reads LEPEPREDDVE. Basic and acidic residues predominate over residues 100–110; that stretch reads DKGPKVPKESL. Basic residues predominate over residues 116 to 166; it reads PPKKGKEKPPKATKKPKEKPPKATKKPKEKPPKATKKPKEKPPKATKKPPS. Residues 182–192 are compositionally biased toward pro residues; sequence PLPPPPSPGPE. The segment covering 193-202 has biased composition (low complexity); sequence ELPQEGGAPL. Basic and acidic residues predominate over residues 211–223; sequence EETHVEAREHQPE. The span at 252-266 shows a compositional bias: basic residues; the sequence is RQKQPRPPPSRRRRP. Basic and acidic residues predominate over residues 267-289; sequence ERVWPEPPEEKAPAPAPEERIEP. Positions 290–300 are enriched in pro residues; the sequence is PVKPLLPPLPP. Positions 326-371 are enriched in basic and acidic residues; it reads PDAERQTDEEKEELKKPKKEDSSPKEETDKWAVEKGKDHKEPRKGE. The 158-residue stretch at 383–540 folds into the F5/8 type C domain; the sequence is VKCPPIGMES…LCMRLEVLGC (158 aa). The interval 390–555 is required for DNA-binding and interaction with NFKBIA; that stretch reads MESHRIEDNQ…YSYYAQNEVV (166 aa). Positions 421-624 are interaction with MAPK1 and MAPK3; that stretch reads TGATEDDYYD…EPEFRYTAGI (204 aa). Residue Asn528 is glycosylated (N-linked (GlcNAc...) asparagine). The interval 555-985 is interaction with PTEN; the sequence is VATDDLDFRH…TQCNFILARS (431 aa). The Peptidase M14 domain occupies 563-904; the sequence is RHHSYKDMRQ…EALLTFMEQV (342 aa). Asn922 carries N-linked (GlcNAc...) asparagine glycosylation. The segment at 941-1158 is required for transcriptional repression; it reads DYWRILNPGE…ETYTVNFGDF (218 aa). Residues 1006–1158 are interaction with MAPK1 and MAPK3; the sequence is DPSRPMTPQQ…ETYTVNFGDF (153 aa). The span at 1108–1137 shows a compositional bias: acidic residues; it reads EFETQLEPEFETQLEPEFEEEEEEEKEEEI. The segment at 1108–1141 is disordered; sequence EFETQLEPEFETQLEPEFEEEEEEEKEEEIATGQ.

The protein belongs to the peptidase M14 family. As to quaternary structure, isoform 1: Interacts with different types of collagen, including collagens I, III, and V. Isoform 2: Interacts with GNG5, NFKBIA, MAPK1, MAPK3 and PTEN. Interaction with MAPK1 may stimulate DNA-binding. May interact with calmodulin. Binds to DNA in vitro. In terms of processing, phosphorylated by MAPK1 in vitro. In terms of tissue distribution, expressed in osteoblast and visceral fat.

The protein resides in the secreted. It localises to the cytoplasm. The protein localises to the nucleus. As a positive regulator of collagen fibrillogenesis, it is probably involved in the organization and remodeling of the extracellular matrix. Its function is as follows. May positively regulate MAP-kinase activity in adipocytes, leading to enhanced adipocyte proliferation and reduced adipocyte differentiation. May also positively regulate NF-kappa-B activity in macrophages by promoting the phosphorylation and subsequent degradation of I-kappa-B-alpha (NFKBIA), leading to enhanced macrophage inflammatory responsiveness. Can act as a transcriptional repressor. The protein is Adipocyte enhancer-binding protein 1 (AEBP1) of Homo sapiens (Human).